The following is a 469-amino-acid chain: DNA (cytosine-5-)-methyltransferase M.ApeKI (469 aa).

Residues 4-469 form the SAM-dependent MTase C5-type domain; sequence YSTISLFSGA…EALAEVLDAV (466 aa). The active site involves cysteine 93.

The protein belongs to the class I-like SAM-binding methyltransferase superfamily. C5-methyltransferase family.

It carries out the reaction a 2'-deoxycytidine in DNA + S-adenosyl-L-methionine = a 5-methyl-2'-deoxycytidine in DNA + S-adenosyl-L-homocysteine + H(+). Cytosine methylase that recognizes the double-stranded sequence 5'-GC(A/T)GC-3', methylates C-5 position of the second cytosine on both strands, and protects the DNA from cleavage by the ApeKI endonuclease. The chain is DNA (cytosine-5-)-methyltransferase M.ApeKI from Aeropyrum pernix (strain ATCC 700893 / DSM 11879 / JCM 9820 / NBRC 100138 / K1).